Consider the following 568-residue polypeptide: Proline--tRNA ligase (568 aa).

The protein belongs to the class-II aminoacyl-tRNA synthetase family. ProS type 1 subfamily. As to quaternary structure, homodimer.

Its subcellular location is the cytoplasm. It catalyses the reaction tRNA(Pro) + L-proline + ATP = L-prolyl-tRNA(Pro) + AMP + diphosphate. In terms of biological role, catalyzes the attachment of proline to tRNA(Pro) in a two-step reaction: proline is first activated by ATP to form Pro-AMP and then transferred to the acceptor end of tRNA(Pro). As ProRS can inadvertently accommodate and process non-cognate amino acids such as alanine and cysteine, to avoid such errors it has two additional distinct editing activities against alanine. One activity is designated as 'pretransfer' editing and involves the tRNA(Pro)-independent hydrolysis of activated Ala-AMP. The other activity is designated 'posttransfer' editing and involves deacylation of mischarged Ala-tRNA(Pro). The misacylated Cys-tRNA(Pro) is not edited by ProRS. This Listeria monocytogenes serotype 4a (strain HCC23) protein is Proline--tRNA ligase.